The primary structure comprises 427 residues: Enolase (427 aa).

A (2R)-2-phosphoglycerate-binding site is contributed by Gln163. Residue Glu205 is the Proton donor of the active site. Mg(2+)-binding residues include Asp242, Glu285, and Asp312. Residues Lys337, Arg366, Ser367, and Lys388 each coordinate (2R)-2-phosphoglycerate. Lys337 functions as the Proton acceptor in the catalytic mechanism.

Belongs to the enolase family. Requires Mg(2+) as cofactor.

It is found in the cytoplasm. It localises to the secreted. The protein resides in the cell surface. It catalyses the reaction (2R)-2-phosphoglycerate = phosphoenolpyruvate + H2O. It functions in the pathway carbohydrate degradation; glycolysis; pyruvate from D-glyceraldehyde 3-phosphate: step 4/5. In terms of biological role, catalyzes the reversible conversion of 2-phosphoglycerate (2-PG) into phosphoenolpyruvate (PEP). It is essential for the degradation of carbohydrates via glycolysis. This chain is Enolase, found in Janthinobacterium sp. (strain Marseille) (Minibacterium massiliensis).